The sequence spans 150 residues: 16 kDa phloem protein 1 (150 aa).

Residues 1 to 108 form the C2 domain; sequence MGMGMMEVHL…LAEGVRKGKS (108 aa). Ca(2+) contacts are provided by aspartate 20, aspartate 27, aspartate 78, aspartate 80, and aspartate 86.

Ca(2+) serves as cofactor. Sieve elements of leaves, stems, roots and flowers.

Binds to both sense and antisense RNA. Interacts with mesophyll plasmodesmata to mediate its own cell-to-cell transport and potentiate RNA trafficking. The sequence is that of 16 kDa phloem protein 1 (PP16-1) from Cucurbita maxima (Pumpkin).